Here is a 301-residue protein sequence, read N- to C-terminus: Sulfate adenylyltransferase subunit 2 (301 aa).

Positions 279–301 (RQGRLIDRDEAGSMEKKKREGYF) are disordered.

Belongs to the PAPS reductase family. CysD subfamily. Sulfate-activating enzymes, NodP and NodQ, may be physically associated.

It carries out the reaction sulfate + ATP + H(+) = adenosine 5'-phosphosulfate + diphosphate. Functionally, proposed to provide activated sulfate for transfer to nod factor. The sequence is that of Sulfate adenylyltransferase subunit 2 (nodP) from Rhizobium sp. (strain N33).